Here is a 184-residue protein sequence, read N- to C-terminus: uncharacterized protein (184 aa).

It belongs to the PhzF family.

It localises to the cytoplasm. Its subcellular location is the nucleus. This is an uncharacterized protein from Schizosaccharomyces pombe (strain 972 / ATCC 24843) (Fission yeast).